Reading from the N-terminus, the 838-residue chain is Probable inorganic carbon transporter subunit DabA (838 aa).

Zn(2+) is bound by residues C353, D355, H537, and C552.

Belongs to the inorganic carbon transporter (TC 9.A.2) DabA family. Forms a complex with DabB. Zn(2+) serves as cofactor.

Its subcellular location is the cell membrane. Part of an energy-coupled inorganic carbon pump. The chain is Probable inorganic carbon transporter subunit DabA from Roseiflexus sp. (strain RS-1).